Here is a 249-residue protein sequence, read N- to C-terminus: Triosephosphate isomerase (249 aa).

The substrate site is built by asparagine 12 and lysine 14. At lysine 14 the chain carries N6-acetyllysine. Serine 21 is modified (phosphoserine). 3'-nitrotyrosine is present on tyrosine 68. Serine 80 bears the Phosphoserine mark. The Electrophile role is filled by histidine 96. Phosphoserine is present on serine 106. Residue lysine 142 forms a Glycyl lysine isopeptide (Lys-Gly) (interchain with G-Cter in SUMO1) linkage. Residue lysine 149 is modified to N6-succinyllysine. Lysine 156 bears the N6-acetyllysine; alternate mark. Lysine 156 carries the post-translational modification N6-succinyllysine; alternate. Phosphoserine is present on serine 159. Glutamate 166 functions as the Proton acceptor in the catalytic mechanism. Threonine 173 carries the post-translational modification Phosphothreonine. Lysine 194 carries the N6-acetyllysine; alternate modification. Lysine 194 is subject to N6-succinyllysine; alternate. N6-methyllysine; alternate is present on lysine 194. Serine 198 carries the post-translational modification Phosphoserine. At tyrosine 209 the chain carries 3'-nitrotyrosine. Position 212 is a phosphoserine (serine 212). Threonine 214 carries the post-translational modification Phosphothreonine. A Phosphoserine modification is found at serine 223. N6-acetyllysine is present on lysine 238.

Belongs to the triosephosphate isomerase family. In terms of assembly, homodimer.

It localises to the cytoplasm. It carries out the reaction D-glyceraldehyde 3-phosphate = dihydroxyacetone phosphate. It catalyses the reaction dihydroxyacetone phosphate = methylglyoxal + phosphate. It functions in the pathway carbohydrate degradation; glycolysis; D-glyceraldehyde 3-phosphate from glycerone phosphate: step 1/1. It participates in carbohydrate biosynthesis; gluconeogenesis. Its function is as follows. Triosephosphate isomerase is an extremely efficient metabolic enzyme that catalyzes the interconversion between dihydroxyacetone phosphate (DHAP) and D-glyceraldehyde-3-phosphate (G3P) in glycolysis and gluconeogenesis. Functionally, it is also responsible for the non-negligible production of methylglyoxal a reactive cytotoxic side-product that modifies and can alter proteins, DNA and lipids. This Homo sapiens (Human) protein is Triosephosphate isomerase (TPI1).